A 348-amino-acid chain; its full sequence is Holliday junction branch migration complex subunit RuvB (348 aa).

Residues 1 to 184 (MTLNRDMVSP…FGIVQRLEFY (184 aa)) are large ATPase domain (RuvB-L). Residues Leu23, Arg24, Gly65, Lys68, Thr69, Thr70, Arg174, Tyr184, and Arg221 each coordinate ATP. A Mg(2+)-binding site is contributed by Thr69. Residues 185–255 (AVDHLVLIVE…VAQKALDLLD (71 aa)) are small ATPAse domain (RuvB-S). Positions 258–348 (SHGFDTMDRK…QEVSDLFPNE (91 aa)) are head domain (RuvB-H). DNA-binding residues include Arg294, Arg313, and Arg318.

This sequence belongs to the RuvB family. Homohexamer. Forms an RuvA(8)-RuvB(12)-Holliday junction (HJ) complex. HJ DNA is sandwiched between 2 RuvA tetramers; dsDNA enters through RuvA and exits via RuvB. An RuvB hexamer assembles on each DNA strand where it exits the tetramer. Each RuvB hexamer is contacted by two RuvA subunits (via domain III) on 2 adjacent RuvB subunits; this complex drives branch migration. In the full resolvosome a probable DNA-RuvA(4)-RuvB(12)-RuvC(2) complex forms which resolves the HJ.

The protein localises to the cytoplasm. The enzyme catalyses ATP + H2O = ADP + phosphate + H(+). In terms of biological role, the RuvA-RuvB-RuvC complex processes Holliday junction (HJ) DNA during genetic recombination and DNA repair, while the RuvA-RuvB complex plays an important role in the rescue of blocked DNA replication forks via replication fork reversal (RFR). RuvA specifically binds to HJ cruciform DNA, conferring on it an open structure. The RuvB hexamer acts as an ATP-dependent pump, pulling dsDNA into and through the RuvAB complex. RuvB forms 2 homohexamers on either side of HJ DNA bound by 1 or 2 RuvA tetramers; 4 subunits per hexamer contact DNA at a time. Coordinated motions by a converter formed by DNA-disengaged RuvB subunits stimulates ATP hydrolysis and nucleotide exchange. Immobilization of the converter enables RuvB to convert the ATP-contained energy into a lever motion, pulling 2 nucleotides of DNA out of the RuvA tetramer per ATP hydrolyzed, thus driving DNA branch migration. The RuvB motors rotate together with the DNA substrate, which together with the progressing nucleotide cycle form the mechanistic basis for DNA recombination by continuous HJ branch migration. Branch migration allows RuvC to scan DNA until it finds its consensus sequence, where it cleaves and resolves cruciform DNA. This Nitrosococcus oceani (strain ATCC 19707 / BCRC 17464 / JCM 30415 / NCIMB 11848 / C-107) protein is Holliday junction branch migration complex subunit RuvB.